A 445-amino-acid chain; its full sequence is Tubulin beta-3 chain (445 aa).

Residues glutamine 11, glutamate 69, serine 138, glycine 142, threonine 143, glycine 144, asparagine 204, and asparagine 226 each contribute to the GTP site. Residue glutamate 69 participates in Mg(2+) binding. Residues 421–445 (EYQQYQDATADEEEEYDEEEEEEAA) are disordered. A compositionally biased stretch (acidic residues) spans 429-445 (TADEEEEYDEEEEEEAA).

This sequence belongs to the tubulin family. Dimer of alpha and beta chains. A typical microtubule is a hollow water-filled tube with an outer diameter of 25 nm and an inner diameter of 15 nM. Alpha-beta heterodimers associate head-to-tail to form protofilaments running lengthwise along the microtubule wall with the beta-tubulin subunit facing the microtubule plus end conferring a structural polarity. Microtubules usually have 13 protofilaments but different protofilament numbers can be found in some organisms and specialized cells. Mg(2+) is required as a cofactor.

It is found in the cytoplasm. The protein resides in the cytoskeleton. Its function is as follows. Tubulin is the major constituent of microtubules, a cylinder consisting of laterally associated linear protofilaments composed of alpha- and beta-tubulin heterodimers. Microtubules grow by the addition of GTP-tubulin dimers to the microtubule end, where a stabilizing cap forms. Below the cap, tubulin dimers are in GDP-bound state, owing to GTPase activity of alpha-tubulin. The polypeptide is Tubulin beta-3 chain (TUBB3) (Triticum aestivum (Wheat)).